We begin with the raw amino-acid sequence, 218 residues long: Cytidylate kinase (218 aa).

Position 11-19 (G11–T19) interacts with ATP.

Belongs to the cytidylate kinase family. Type 1 subfamily.

The protein resides in the cytoplasm. The catalysed reaction is CMP + ATP = CDP + ADP. The enzyme catalyses dCMP + ATP = dCDP + ADP. The polypeptide is Cytidylate kinase (Mycoplasmopsis synoviae (strain 53) (Mycoplasma synoviae)).